Reading from the N-terminus, the 69-residue chain is Consomatin Be1 (69 aa).

The signal sequence occupies residues 1 to 22; that stretch reads MEMAYWVMVMMMVWITAPLSEG. The propeptide occupies 23–57; the sequence is GKLNDVIRALAPDDVTPQFILRSLISRRRSDSDVR. E58 carries the post-translational modification 4-carboxyglutamate. A disulfide bridge connects residues C62 and C67. D-tryptophan is present on W64. Residues P68 and P69 each carry the 4-hydroxyproline modification.

The protein belongs to the conotoxin C superfamily. Consomatin family. In terms of tissue distribution, expressed by the venom duct.

Its subcellular location is the secreted. Functionally, moderately activates human somatostatin receptors (SSTR) with a preferential activation of SSTR1 and SSTR4. In vivo, does not cause behavioral changes in mice within a few minutes of intracranial injection, but causes a progressive loss of movement thereafter. Four to five hours after injection, mice recover, even with the highest dose tested. Shows antinociception and antihyperalgesia activities in two mouse models of acute pain, most probably by acting outside the central nervous system. The protein is Consomatin Be1 of Conus betulinus (Beech cone).